We begin with the raw amino-acid sequence, 220 residues long: Pyridoxine/pyridoxamine 5'-phosphate oxidase (220 aa).

FMN is bound by residues 49–54 (RMVLLK), 68–69 (YT), Lys75, and Gln97. Lys54 provides a ligand contact to substrate. Residues Tyr115, Arg119, and Ser123 each contribute to the substrate site. FMN contacts are provided by residues 132–133 (QS) and Trp176. A substrate-binding site is contributed by 182–184 (RLH). Arg186 is a binding site for FMN.

Belongs to the pyridoxamine 5'-phosphate oxidase family. Homodimer. Requires FMN as cofactor.

The catalysed reaction is pyridoxamine 5'-phosphate + O2 + H2O = pyridoxal 5'-phosphate + H2O2 + NH4(+). The enzyme catalyses pyridoxine 5'-phosphate + O2 = pyridoxal 5'-phosphate + H2O2. It participates in cofactor metabolism; pyridoxal 5'-phosphate salvage; pyridoxal 5'-phosphate from pyridoxamine 5'-phosphate: step 1/1. It functions in the pathway cofactor metabolism; pyridoxal 5'-phosphate salvage; pyridoxal 5'-phosphate from pyridoxine 5'-phosphate: step 1/1. Its function is as follows. Catalyzes the oxidation of either pyridoxine 5'-phosphate (PNP) or pyridoxamine 5'-phosphate (PMP) into pyridoxal 5'-phosphate (PLP). The polypeptide is Pyridoxine/pyridoxamine 5'-phosphate oxidase (Paracoccus denitrificans (strain Pd 1222)).